The chain runs to 573 residues: Zinc finger protein 10 (573 aa).

The region spanning 14 to 85 is the KRAB domain; that stretch reads VTFKDVFVDF…EREIHQETHP (72 aa). A C2H2-type 1; atypical zinc finger spans residues 206-232; the sequence is DSCASNSNECGQTFCQNIHLIQFARTH. 9 C2H2-type zinc fingers span residues 265–287, 293–315, 321–343, 349–371, 377–399, 405–427, 433–455, 461–483, and 489–511; these read YECK…QLIH, YECK…QKTH, YECK…QRTH, YTCN…QRTH, YECP…QRTH, YECN…HRIH, FECK…QRTH, YECH…QRIH, and YECC…QRIH. The segment at 517–539 adopts a C2H2-type 11; atypical zinc-finger fold; that stretch reads YKCNQCGIIFSQNSPFIVHQIAH.

It belongs to the krueppel C2H2-type zinc-finger protein family. As to quaternary structure, interacts (via the KRAB domain) with TRIM28 (via the RBCC domain).

The protein resides in the nucleus. Functionally, may be involved in transcriptional regulation. This is Zinc finger protein 10 (ZNF10) from Homo sapiens (Human).